The following is a 201-amino-acid chain: Homeobox protein goosecoid-2 (201 aa).

Disordered regions lie at residues 1-55, 95-124, and 179-201; these read MATA…PEAP, PATP…RRTR, and RHQK…KESC. Positions 95–106 are enriched in low complexity; that stretch reads PATPSPLTAPRA. Residues 123-182 constitute a DNA-binding region (homeobox); the sequence is TRRHRTIFSEEQLQALEALFVQNQYPDVGTRERLAVRIRLREERVEVWFKNRRAKWRHQK.

It belongs to the paired homeobox family. Bicoid subfamily. In terms of tissue distribution, expressed in adult testis.

It localises to the nucleus. In terms of biological role, may have a role in development. May regulate its own transcription. May bind the bicoid consensus sequence TAATCC. This chain is Homeobox protein goosecoid-2 (Gsc2), found in Mus musculus (Mouse).